Consider the following 599-residue polypeptide: uncharacterized protein (599 aa).

Residues 1–13 show a composition bias toward low complexity; sequence MSSSSSHNSFSGS. 2 disordered regions span residues 1 to 27 and 41 to 86; these read MSSS…IDGL and YPSN…DDTN. Over residues 14–27 the composition is skewed to polar residues; it reads KTNAAEGQNSIDGL. Residues 44–70 are compositionally biased toward basic and acidic residues; sequence NEEKEVKETDIVPDENKVNELDVHKQS. 14 helical membrane passes run 97-117, 135-155, 162-182, 192-212, 223-243, 251-271, 290-310, 321-341, 359-379, 396-416, 423-443, 452-472, 489-509, and 552-572; these read IVVP…TIVT, WIGS…GVFC, IVLY…GASQ, AIQG…ISDI, GILA…GGAI, WIFF…VVFL, FIGL…ISLG, ILCY…YDTF, AALL…AYYV, VHTI…GMVL, LPLI…MICV, VMGL…PPLI, TLMF…EVIF, and VIWI…FFIK.

Belongs to the major facilitator superfamily. TCR/Tet family.

Its subcellular location is the membrane. This is an uncharacterized protein from Schizosaccharomyces pombe (strain 972 / ATCC 24843) (Fission yeast).